A 105-amino-acid chain; its full sequence is Putative ferredoxin-3 (105 aa).

4Fe-4S ferredoxin-type domains lie at 17 to 46 and 70 to 100; these read YLTA…LHGI and TIMV…HVAA. 8 residues coordinate [4Fe-4S] cluster: Cys-26, Cys-29, Cys-32, Cys-36, Cys-80, Cys-83, Cys-86, and Cys-90.

Requires [4Fe-4S] cluster as cofactor.

In terms of biological role, ferredoxins are iron-sulfur proteins that transfer electrons in a wide variety of metabolic reactions. This chain is Putative ferredoxin-3 (fdxB), found in Sinorhizobium fredii (strain NBRC 101917 / NGR234).